A 156-amino-acid polypeptide reads, in one-letter code: E3 ubiquitin-protein ligase LAP (156 aa).

The RING-CH-type zinc finger occupies 1–55 (MSDICWICNDVCDERNNFCGCNEEYKVVHIKCMQLWINYSKKKECNLCKTKYNIK). The Cytoplasmic segment spans residues 1-73 (MSDICWICND…WNWCFNDKKT (73 aa)). Zn(2+)-binding residues include Cys5, Cys8, Cys19, Cys21, His29, Cys32, Cys45, and Cys48. Residues 74–94 (TLFKIFFILFALVFIFLTITL) traverse the membrane as a helical segment. The Lumenal segment spans residues 95-111 (SNDMANLVTGINDLICS). The chain crosses the membrane as a helical span at residues 112–132 (IIFLIVYTVVMLTSICFSVFV). Residues 133–156 (VAIVVDFLLEAKEKNSFLTIREIV) lie on the Cytoplasmic side of the membrane.

It belongs to the poxviridae LAP protein family.

It localises to the host membrane. The protein resides in the host Golgi apparatus. It is found in the host trans-Golgi network membrane. Its subcellular location is the host early endosome membrane. The enzyme catalyses S-ubiquitinyl-[E2 ubiquitin-conjugating enzyme]-L-cysteine + [acceptor protein]-L-lysine = [E2 ubiquitin-conjugating enzyme]-L-cysteine + N(6)-ubiquitinyl-[acceptor protein]-L-lysine.. Its function is as follows. E3 ubiquitin-protein ligase which promotes ubiquitination and subsequent degradation of host MHC-I and CD4 molecules, presumably to prevent lysis of infected cells by cytotoxic T-lymphocytes and NK cell. Binds target molecules through transmembrane interaction. The result of this ubiquitination is the enhancement of the endocytosis of the target chain and the delivery to the lysosome, where it is proteolytically destroyed. The sequence is that of E3 ubiquitin-protein ligase LAP from Yaba-like disease virus (YLDV).